We begin with the raw amino-acid sequence, 147 residues long: Endoribonuclease YbeY (147 aa).

Residues His-111, His-115, and Asp-121 each coordinate Zn(2+).

Belongs to the endoribonuclease YbeY family. Requires Zn(2+) as cofactor.

It localises to the cytoplasm. Single strand-specific metallo-endoribonuclease involved in late-stage 70S ribosome quality control and in maturation of the 3' terminus of the 16S rRNA. This Amoebophilus asiaticus (strain 5a2) protein is Endoribonuclease YbeY.